The primary structure comprises 81 residues: Extracellular matrix regulatory protein B (81 aa).

In terms of biological role, regulates the biosynthesis of the extracellular matrix and the biofilm formation. May act as an enhancer of biofilm gene expression. Acts in parallel to the pathway that governs SinR derepression. The polypeptide is Extracellular matrix regulatory protein B (Bacillus subtilis (strain 168)).